The chain runs to 227 residues: Peroxiredoxin-like 2A (227 aa).

The segment at 13-111 (LWSISIGAFG…DQLGVPLYAI (99 aa)) is thioredoxin fold. Active-site redox-active residues include C84 and C87.

Belongs to the peroxiredoxin-like PRXL2 family. PRXL2A subfamily.

The protein resides in the cytoplasm. Involved in redox regulation of the cell. Acts as an antioxidant. This is Peroxiredoxin-like 2A (prxl2a) from Xenopus laevis (African clawed frog).